Reading from the N-terminus, the 104-residue chain is UPF0145 protein HCH_01985 (104 aa).

It belongs to the UPF0145 family.

The polypeptide is UPF0145 protein HCH_01985 (Hahella chejuensis (strain KCTC 2396)).